The primary structure comprises 399 residues: Lymphoid enhancer-binding factor 1 (399 aa).

Gly residues predominate over residues 1–14 (MPQLSGGGGGGGGD). Residues 1–62 (MPQLSGGGGG…IKSSLVNESE (62 aa)) are CTNNB1-binding. The segment at 1-104 (MPQLSGGGGG…KHPDGGLYNK (104 aa)) is disordered. Composition is skewed to basic and acidic residues over residues 24 to 45 (IPFK…SHPE) and 82 to 98 (PYHD…KHPD). Lysine 27 is covalently cross-linked (Glycyl lysine isopeptide (Lys-Gly) (interchain with G-Cter in SUMO)). Phosphoserine is present on serine 132. At threonine 155 the chain carries Phosphothreonine; by NLK. Serine 166 carries the post-translational modification Phosphoserine; by NLK. Disordered stretches follow at residues 166–192 (SPGS…PAPD) and 268–298 (VKQE…KRPH). Lysine 269 participates in a covalent cross-link: Glycyl lysine isopeptide (Lys-Gly) (interchain with G-Cter in SUMO). Basic and acidic residues predominate over residues 269 to 296 (KQEHPHTDSDLMHVKPQHEQRKEQEPKR). The HMG box DNA-binding region spans 299-367 (IKKPLNAFML…LHMQLYPGWS (69 aa)). The interval 369-399 (RDNYGKKKKRKREKLQESASGTGPRMTAAYI) is disordered.

Belongs to the TCF/LEF family. Binds the armadillo repeat of CTNNB1 and forms a stable complex. Interacts with EP300, TLE1 and PIASG. Binds ALYREF/THOC4, MDFI and MDFIC. Interacts with NLK. Interacts with DAZAP2. Post-translationally, phosphorylated at Thr-155 and/or Ser-166 by NLK. Phosphorylation by NLK at these sites represses LEF1-mediated transcriptional activation of target genes of the canonical Wnt signaling pathway. In terms of tissue distribution, detected in thymus. Not detected in normal colon, but highly expressed in colon cancer biopsies and colon cancer cell lines. Expressed in several pancreatic tumors and weakly expressed in normal pancreatic tissue. Isoforms 1 and 5 are detected in several pancreatic cell lines.

The protein localises to the nucleus. Functionally, transcription factor that binds DNA in a sequence-specific manner. Participates in the Wnt signaling pathway. Activates transcription of target genes in the presence of CTNNB1 and EP300. PIAG antagonizes both Wnt-dependent and Wnt-independent activation by LEF1. TLE1, TLE2, TLE3 and TLE4 repress transactivation mediated by LEF1 and CTNNB1. Regulates T-cell receptor alpha enhancer function. Required for IL17A expressing gamma-delta T-cell maturation and development, via binding to regulator loci of BLK to modulate expression. Acts as a positive regulator of odontoblast differentiation during mesenchymal tooth germ formation, expression is repressed during the bell stage by MSX1-mediated inhibition of CTNNB1 signaling. May play a role in hair cell differentiation and follicle morphogenesis. In terms of biological role, transcriptionally activates MYC and CCND1 expression and enhances proliferation of pancreatic tumor cells. Its function is as follows. Lacks the CTNNB1 interaction domain and may therefore be an antagonist for Wnt signaling. Transcriptionally activates the fibronectin promoter, binds to and represses transcription from the E-cadherin promoter in a CTNNB1-independent manner, and is involved in reducing cellular aggregation and increasing cell migration of pancreatic cancer cells. This Homo sapiens (Human) protein is Lymphoid enhancer-binding factor 1.